Consider the following 85-residue polypeptide: Large ribosomal subunit protein bL27 (85 aa).

Positions 1-22 are disordered; it reads MAHKKAGGSTRNGRDSESKRLG.

The protein belongs to the bacterial ribosomal protein bL27 family.

This chain is Large ribosomal subunit protein bL27, found in Teredinibacter turnerae (strain ATCC 39867 / T7901).